The sequence spans 331 residues: D-alanine--D-alanine ligase (331 aa).

An ATP-grasp domain is found at lysine 122–glutamate 328. Position 152 to 207 (alanine 152 to glutamate 207) interacts with ATP. 3 residues coordinate Mg(2+): aspartate 282, glutamate 295, and asparagine 297.

Belongs to the D-alanine--D-alanine ligase family. Mg(2+) is required as a cofactor. The cofactor is Mn(2+).

It localises to the cytoplasm. The catalysed reaction is 2 D-alanine + ATP = D-alanyl-D-alanine + ADP + phosphate + H(+). It functions in the pathway cell wall biogenesis; peptidoglycan biosynthesis. Functionally, cell wall formation. The polypeptide is D-alanine--D-alanine ligase (Vibrio vulnificus (strain CMCP6)).